The primary structure comprises 428 residues: Cysteine--tRNA ligase (428 aa).

Cysteine 23 contributes to the Zn(2+) binding site. The 'HIGH' region motif lies at 25-35 (PTVYNDLHLGN). Zn(2+) contacts are provided by cysteine 196, histidine 221, and glutamate 225. Residues 253 to 257 (KMSKS) carry the 'KMSKS' region motif. Lysine 256 contributes to the ATP binding site.

Belongs to the class-I aminoacyl-tRNA synthetase family. In terms of assembly, monomer. The cofactor is Zn(2+).

The protein localises to the cytoplasm. The catalysed reaction is tRNA(Cys) + L-cysteine + ATP = L-cysteinyl-tRNA(Cys) + AMP + diphosphate. In Mycoplasma genitalium (strain ATCC 33530 / DSM 19775 / NCTC 10195 / G37) (Mycoplasmoides genitalium), this protein is Cysteine--tRNA ligase (cysS).